The sequence spans 304 residues: WW domain-binding protein 1 (304 aa).

The disordered stretch occupies residues 1 to 26 (MARASSRNSSEEAWGSLQAPQQQQSP). 2 consecutive short sequence motifs (PPxY motif) follow at residues 159–162 (PPAY) and 172–176 (PPPPY). Disordered stretches follow at residues 206-235 (TNVEGVSSQQSALPHQEGEPRAGLSPVHIP) and 252-304 (CPCP…GDIP). Polar residues predominate over residues 209-218 (EGVSSQQSAL).

In terms of assembly, binds to the WW domain of YAP1, WWP1 and WWP2. Interacts with WWOX. Interacts with NEDD4.

The protein is WW domain-binding protein 1 (Wbp1) of Mus musculus (Mouse).